A 285-amino-acid polypeptide reads, in one-letter code: Polyamine aminopropyltransferase (285 aa).

Positions Gln-2–Lys-237 constitute a PABS domain. Residue Gln-31 participates in S-methyl-5'-thioadenosine binding. Asp-86 is a spermidine binding site. S-methyl-5'-thioadenosine-binding positions include Glu-106 and Asp-137 to Gly-138. Asp-155 acts as the Proton acceptor in catalysis. Asp-155 to Asp-158 is a spermidine binding site.

It belongs to the spermidine/spermine synthase family. Homodimer or homotetramer.

Its subcellular location is the cytoplasm. It catalyses the reaction S-adenosyl 3-(methylsulfanyl)propylamine + putrescine = S-methyl-5'-thioadenosine + spermidine + H(+). It functions in the pathway amine and polyamine biosynthesis; spermidine biosynthesis; spermidine from putrescine: step 1/1. Functionally, catalyzes the irreversible transfer of a propylamine group from the amino donor S-adenosylmethioninamine (decarboxy-AdoMet) to putrescine (1,4-diaminobutane) to yield spermidine. This Agathobacter rectalis (strain ATCC 33656 / DSM 3377 / JCM 17463 / KCTC 5835 / VPI 0990) (Eubacterium rectale) protein is Polyamine aminopropyltransferase.